A 666-amino-acid polypeptide reads, in one-letter code: NAD(P)H-quinone oxidoreductase subunit 5, organellar chromatophore 1 (666 aa).

The next 15 membrane-spanning stretches (helical) occupy residues 8-28 (LVWLIPILPFIGAFLVGFGLI), 41-61 (AALLLISSVGISAVLSFMVLA), 90-110 (VDPIGATMLALVSTVAILVMV), 121-141 (SYVRFFTYLGLFTSSMLALIL), 145-165 (LLEIYVFWELVGMCSYLLIGF), 190-210 (FLLGILGLFWATNSFDFQIVA), 220-240 (GSIPHWAAIALCLLLFMGPMA), 259-279 (TPISALIHAATMVAAGVFLVA), 293-313 (IIVAVIGTITCFLGASIALIQ), 328-348 (LGYMMLAMGCGAPVAGMFHLI), 396-416 (GITFFIGCVAISGIPPLAGFW), 428-448 (SYPLLWGVGLFTAGLTAFYMF), 497-517 (TLPLVILSVPSVLIGFLGSPW), 542-562 (FLPLAIASVMISTCGIVIATI), and 643-663 (GRPQFYALIIFGGVISLIVIF).

It belongs to the complex I subunit 5 family. NDH is composed of at least 16 different subunits, 5 of which are encoded in the nucleus.

The protein resides in the plastid. It is found in the organellar chromatophore thylakoid membrane. It carries out the reaction a plastoquinone + NADH + (n+1) H(+)(in) = a plastoquinol + NAD(+) + n H(+)(out). The catalysed reaction is a plastoquinone + NADPH + (n+1) H(+)(in) = a plastoquinol + NADP(+) + n H(+)(out). Its function is as follows. NDH shuttles electrons from NAD(P)H:plastoquinone, via FMN and iron-sulfur (Fe-S) centers, to quinones in the photosynthetic chain and possibly in a chloroplast respiratory chain. The immediate electron acceptor for the enzyme in this species is believed to be plastoquinone. Couples the redox reaction to proton translocation, and thus conserves the redox energy in a proton gradient. The polypeptide is NAD(P)H-quinone oxidoreductase subunit 5, organellar chromatophore 1 (ndhF1) (Paulinella chromatophora).